A 345-amino-acid polypeptide reads, in one-letter code: Beta-hexosaminidase (345 aa).

Substrate is bound by residues aspartate 60, arginine 68, arginine 132, and 162–163 (KH). The Proton donor/acceptor role is filled by histidine 175. The active-site Nucleophile is the aspartate 247.

This sequence belongs to the glycosyl hydrolase 3 family. NagZ subfamily.

It is found in the cytoplasm. It catalyses the reaction Hydrolysis of terminal non-reducing N-acetyl-D-hexosamine residues in N-acetyl-beta-D-hexosaminides.. Its pathway is cell wall biogenesis; peptidoglycan recycling. Functionally, plays a role in peptidoglycan recycling by cleaving the terminal beta-1,4-linked N-acetylglucosamine (GlcNAc) from peptide-linked peptidoglycan fragments, giving rise to free GlcNAc, anhydro-N-acetylmuramic acid and anhydro-N-acetylmuramic acid-linked peptides. The chain is Beta-hexosaminidase from Actinobacillus pleuropneumoniae serotype 3 (strain JL03).